A 203-amino-acid chain; its full sequence is Secreted phosphoprotein 24 (203 aa).

An N-terminal signal peptide occupies residues 1–23; the sequence is MEQAMLKTLALLVLGMHYWCATG. 2 cysteine pairs are disulfide-bonded: cysteine 86-cysteine 96 and cysteine 109-cysteine 127. Serine 90 carries the phosphoserine modification. Phosphoserine is present on residues serine 137, serine 138, serine 162, serine 165, and serine 174.

The protein belongs to the SPP2 family. Phosphorylation sites are present in the extracellular medium.

The protein localises to the secreted. Could coordinate an aspect of bone turnover. This chain is Secreted phosphoprotein 24 (Spp2), found in Mus musculus (Mouse).